The primary structure comprises 1299 residues: DNA-directed RNA polymerase subunit beta' (1299 aa).

Residues cysteine 60, cysteine 62, cysteine 75, and cysteine 78 each coordinate Zn(2+). The tract at residues 385–405 (GRRGRPVTGPGNRPLKSLSDM) is disordered. 3 residues coordinate Mg(2+): aspartate 535, aspartate 537, and aspartate 539. Zn(2+) contacts are provided by cysteine 886, cysteine 962, cysteine 969, and cysteine 972.

This sequence belongs to the RNA polymerase beta' chain family. As to quaternary structure, the RNAP catalytic core consists of 2 alpha, 1 beta, 1 beta' and 1 omega subunit. When a sigma factor is associated with the core the holoenzyme is formed, which can initiate transcription. Requires Mg(2+) as cofactor. The cofactor is Zn(2+).

It carries out the reaction RNA(n) + a ribonucleoside 5'-triphosphate = RNA(n+1) + diphosphate. Its function is as follows. DNA-dependent RNA polymerase catalyzes the transcription of DNA into RNA using the four ribonucleoside triphosphates as substrates. The polypeptide is DNA-directed RNA polymerase subunit beta' (Streptomyces coelicolor (strain ATCC BAA-471 / A3(2) / M145)).